The following is a 117-amino-acid chain: Snaclec CHH-B subunit beta (117 aa).

3 cysteine pairs are disulfide-bonded: Cys2–Cys13, Cys30–Cys115, and Cys92–Cys107. In terms of domain architecture, C-type lectin spans 9–116; the sequence is YEGHCYRVFQ…CSKTHNVVCK (108 aa).

It belongs to the snaclec family. In terms of assembly, heterodimer of subunits alpha and beta; disulfide-linked. In terms of tissue distribution, expressed by the venom gland.

The protein localises to the secreted. Its function is as follows. Binds to the subunit GPIbalpha (GP1BA) of the platelet GPIb/V/IX receptor system. It inhibits ristocetin- and vWF-induced platelet aggregation in platelet-rich plasma by inhibiting the binding of vWF to GPIbalpha. The protein is Snaclec CHH-B subunit beta of Crotalus horridus (Timber rattlesnake).